The primary structure comprises 171 residues: Ribosome maturation factor RimM (171 aa).

The 73-residue stretch at 96-168 folds into the PRC barrel domain; that stretch reads EDGFYDHELE…TATITPPEGL (73 aa).

It belongs to the RimM family. As to quaternary structure, binds ribosomal protein uS19.

Its subcellular location is the cytoplasm. Functionally, an accessory protein needed during the final step in the assembly of 30S ribosomal subunit, possibly for assembly of the head region. Essential for efficient processing of 16S rRNA. May be needed both before and after RbfA during the maturation of 16S rRNA. It has affinity for free ribosomal 30S subunits but not for 70S ribosomes. This chain is Ribosome maturation factor RimM, found in Corynebacterium glutamicum (strain ATCC 13032 / DSM 20300 / JCM 1318 / BCRC 11384 / CCUG 27702 / LMG 3730 / NBRC 12168 / NCIMB 10025 / NRRL B-2784 / 534).